Reading from the N-terminus, the 365-residue chain is Ribosomal RNA large subunit methyltransferase F (365 aa).

Positions 1-50 are disordered; that stretch reads MSKPAVKSVPSATAKTATRAANPRQKAKAPKQAKPEGKGRAKPSKDKPRA. The segment covering 33 to 50 has biased composition (basic and acidic residues); it reads AKPEGKGRAKPSKDKPRA.

The protein belongs to the methyltransferase superfamily. METTL16/RlmF family.

It is found in the cytoplasm. It catalyses the reaction adenosine(1618) in 23S rRNA + S-adenosyl-L-methionine = N(6)-methyladenosine(1618) in 23S rRNA + S-adenosyl-L-homocysteine + H(+). Functionally, specifically methylates the adenine in position 1618 of 23S rRNA. The polypeptide is Ribosomal RNA large subunit methyltransferase F (Shewanella baltica (strain OS195)).